Consider the following 560-residue polypeptide: MTNEYLAPFVDELFNLGVREAVFSPGSRSTALAMLFEEYKKYDTYVNIDERSAAFFALGIAKAKKRPVVLVCTSGSAAAHHFPAVLEAKMSRVPLIILTADRPAELQFVGAPQTVDQTRFFGNFVNHFENLEAPHIQKQSQTENFWTYPRKVAQRAVLSAISPLSGPVQINVPLRDLLVPELKSENYEKGRSKHAFKFYEGQAQVILPFDEALLSGKTLILAGANFDKDYSEALLKLAEQLKAPILADPLSNLRNHNHPLVIDSYDAFLANNDLKTQLKADAILLFGQMPVSKRLQQFVAFNNEAEFIQVDPALDYRNPSLTTTTMVQSDVLPFASSIKKVNSDSSYLEKWQNAQEKMRQLLEKVTYEESPFEGRYVQELQKHLEALDAQLLVSNSMEIRDIDYWWKKADAKVRILGNRGVNGIDGTESTALGIATTGKPTVLLTGDLSMLHDLNGLIVGKTHELNLTIVLFNNDGGGIFHHLAQKGVPNFDYLFSTPHGLNFAGLAELTGLDYHLVSGYADFGQQFEASLHQSGIHLLEIKTDKDLSLALHQKYTTYEN.

Belongs to the TPP enzyme family. MenD subfamily. In terms of assembly, homodimer. Requires Mg(2+) as cofactor. It depends on Mn(2+) as a cofactor. Thiamine diphosphate is required as a cofactor.

It catalyses the reaction isochorismate + 2-oxoglutarate + H(+) = 5-enolpyruvoyl-6-hydroxy-2-succinyl-cyclohex-3-ene-1-carboxylate + CO2. The protein operates within quinol/quinone metabolism; 1,4-dihydroxy-2-naphthoate biosynthesis; 1,4-dihydroxy-2-naphthoate from chorismate: step 2/7. It participates in quinol/quinone metabolism; menaquinone biosynthesis. Catalyzes the thiamine diphosphate-dependent decarboxylation of 2-oxoglutarate and the subsequent addition of the resulting succinic semialdehyde-thiamine pyrophosphate anion to isochorismate to yield 2-succinyl-5-enolpyruvyl-6-hydroxy-3-cyclohexene-1-carboxylate (SEPHCHC). The sequence is that of 2-succinyl-5-enolpyruvyl-6-hydroxy-3-cyclohexene-1-carboxylate synthase from Lactococcus lactis subsp. lactis (strain IL1403) (Streptococcus lactis).